An 84-amino-acid chain; its full sequence is U4-theraphotoxin-Hhn1a (84 aa).

The first 22 residues, 1–22 (MKVTLIAILTCAAVLVLHTTAA), serve as a signal peptide directing secretion. A propeptide spanning residues 23-47 (EELEESQLMEVGMPDTELEAVDEER) is cleaved from the precursor. 3 disulfides stabilise this stretch: Cys51-Cys65, Cys55-Cys76, and Cys70-Cys81.

The protein belongs to the neurotoxin 12 (Hwtx-2) family. 02 (Hwtx-2) subfamily. In terms of tissue distribution, expressed by the venom gland.

The protein localises to the secreted. In terms of biological role, postsynaptic neurotoxin. This chain is U4-theraphotoxin-Hhn1a, found in Cyriopagopus hainanus (Chinese bird spider).